The following is a 626-amino-acid chain: MFSHQDRDRDRKEDGGGDGTEMKSKSRSQPSGLNRVKNLSRKLSAKSRKERKDRDSTDNSSKMSSPGGETSTKQQQELKAQIKIGHYILKETLGVGTFGKVKVGIHETTQYKVAVKILNRQKIKSLDVVGKIRREIQNLSLFRHPHIIRLYQVISTPSDIFMIMEHVSGGELFDYIVKHGRLKTAEARRFFQQIISGVDYCHRHMVVHRDLKPENLLLDEQNNVKIADFGLSNIMTDGDFLRTSCGSPNYAAPEVISGKLYAGPEVDVWSCGVILYALLCGTLPFDDEHVPSLFRKIKSGVFPTPDFLERPIVNLLHHMLCVDPMKRATIKDVIAHEWFQKDLPNYLFPPINESEASIVDIEAVREVTEFQRYHVAEEEVTSALLGDDPHHHLSIAYNLIVDNKRIADETAKLSIEEFYQVTPNKGPGPVHRHPERIAASVSSKITPTLDNTEASGANRNKRAKWHLGIRSQSRPEDIMFEVFRAMKQLDMEWKVLNPYHVIVRRKPDAPAADPPKMSLQLYQVDQRSYLLDFKSLADEESGSASASSSRHASMSMPQKPAGIRGTRTSSMPQAMSMEASIEKMEVHDFSDMSCDVTPPPSPGGAKLSQTMQFFEICAALIGTLAR.

Over residues 1–24 the composition is skewed to basic and acidic residues; it reads MFSHQDRDRDRKEDGGGDGTEMKS. Residues 1-77 form a disordered region; the sequence is MFSHQDRDRD…GETSTKQQQE (77 aa). Positions 38–49 are enriched in basic residues; it reads NLSRKLSAKSRK. Polar residues predominate over residues 58–77; that stretch reads DNSSKMSSPGGETSTKQQQE. Positions 87-339 constitute a Protein kinase domain; the sequence is YILKETLGVG…IKDVIAHEWF (253 aa). Residues 93–101 and Lys-116 each bind ATP; that span reads LGVGTFGKV. Asp-210 (proton acceptor) is an active-site residue. Position 243 is a phosphothreonine; by par-4 (Thr-243). The tract at residues 541–568 is disordered; it reads SGSASASSSRHASMSMPQKPAGIRGTRT. A compositionally biased stretch (low complexity) spans 542–555; it reads GSASASSSRHASMS.

Belongs to the protein kinase superfamily. CAMK Ser/Thr protein kinase family. SNF1 subfamily. In terms of assembly, tetramer, composed of 2 regulatory (R) and 2 catalytic (C) subunits. In the presence of cAMP it dissociates into 2 active monomeric C subunits and an R dimer that binds four cAMP molecules. Post-translationally, phosphorylated on Thr-243 in response to oxidative stress and during dauer development. Phosphorylation at Thr-243 is increased in response to sodium azide or the AMP analog AICAR (5-amino-1-(5-phospho-beta-D-ribosyl)imidazole-4-carboxamide). Expressed in the pharynx, the ventral cord, neurons including the hermaphrodite-specific neuron, body wall muscles, the vulva, the excretory canal, and weakly in the intestine.

The enzyme catalyses L-seryl-[protein] + ATP = O-phospho-L-seryl-[protein] + ADP + H(+). It carries out the reaction L-threonyl-[protein] + ATP = O-phospho-L-threonyl-[protein] + ADP + H(+). Activated by phosphorylation. Its function is as follows. Acts as a sensor that couples lifespan to information about energy levels and insulin-like signals. Role in motility and response to oxidative stress. Involved in the establishment of germline stem cell (GSC) quiescence during dauer development. Plays a role in axon regrowth after axotomy in PLM neurons. Plays a role in the maintenance of glycogen stores which are necessary for resistance to hyperosmotic stress. Plays a role in the regulation of flp-7 secretion from ASI neurons. Keeps the CREB-regulated transcription coactivator 1 homolog crtc-1 inactive which in turn inhibits flp-7 secretion. Following serotonin signaling, derepresses crtc-1 which stimulates flp-7 secretion and subsequent body fat loss. This chain is 5'-AMP-activated protein kinase catalytic subunit alpha-2, found in Caenorhabditis elegans.